The chain runs to 618 residues: DNA mismatch repair protein MutL (618 aa).

Residues E367–G402 form a disordered region. A compositionally biased stretch (gly residues) spans G382 to T392.

Belongs to the DNA mismatch repair MutL/HexB family.

Functionally, this protein is involved in the repair of mismatches in DNA. It is required for dam-dependent methyl-directed DNA mismatch repair. May act as a 'molecular matchmaker', a protein that promotes the formation of a stable complex between two or more DNA-binding proteins in an ATP-dependent manner without itself being part of a final effector complex. This Salmonella paratyphi A (strain ATCC 9150 / SARB42) protein is DNA mismatch repair protein MutL.